The sequence spans 65 residues: Large ribosomal subunit protein bL35 (65 aa).

Residues 1–23 (MPKMKTHRGAAKRFKKTGTGKLK) form a disordered region.

This sequence belongs to the bacterial ribosomal protein bL35 family.

The sequence is that of Large ribosomal subunit protein bL35 from Clostridium perfringens (strain ATCC 13124 / DSM 756 / JCM 1290 / NCIMB 6125 / NCTC 8237 / Type A).